An 84-amino-acid chain; its full sequence is Small ribosomal subunit protein eS27 (84 aa).

Over residues 1–16 the composition is skewed to basic and acidic residues; that stretch reads MPLAKDPLHPSPEEEK. Positions 1–25 are disordered; sequence MPLAKDPLHPSPEEEKRKHKKKRLV. Ser-11 bears the Phosphoserine mark. Residues 38-60 form a C4-type zinc finger; the sequence is PGCYKITTVFSHAQTVVLCVGCS.

This sequence belongs to the eukaryotic ribosomal protein eS27 family. As to quaternary structure, component of the small ribosomal subunit. Part of the small subunit (SSU) processome, composed of more than 70 proteins and the RNA chaperone small nucleolar RNA (snoRNA) U3. The cofactor is Zn(2+).

The protein localises to the cytoplasm. The protein resides in the nucleus. It localises to the nucleolus. Its function is as follows. Component of the small ribosomal subunit. The ribosome is a large ribonucleoprotein complex responsible for the synthesis of proteins in the cell. Required for proper rRNA processing and maturation of 18S rRNAs. Part of the small subunit (SSU) processome, first precursor of the small eukaryotic ribosomal subunit. During the assembly of the SSU processome in the nucleolus, many ribosome biogenesis factors, an RNA chaperone and ribosomal proteins associate with the nascent pre-rRNA and work in concert to generate RNA folding, modifications, rearrangements and cleavage as well as targeted degradation of pre-ribosomal RNA by the RNA exosome. The protein is Small ribosomal subunit protein eS27 (RPS27) of Pongo abelii (Sumatran orangutan).